Consider the following 313-residue polypeptide: uncharacterized protein (313 aa).

2 consecutive transmembrane segments (helical) span residues 42 to 64 and 74 to 96; these read LVVLFNGALLLLCMGTGYVLFLT and VRAYGIFFLIFLLLFLLINTLYV.

The protein localises to the cell membrane. This is an uncharacterized protein from Treponema pallidum (strain Nichols).